A 445-amino-acid polypeptide reads, in one-letter code: MAVAIAAARVWRLNRGLSQAALLLLRRPGARGLARSHPRRQQQQFSSLDDKPQFPGASAEFIDKLEFIQPNVISGIPIYRVMDRQGQIINPSEDPHLPKEKVLKLYKSMTLLNTMDRILYESQRQGRISFYMTNYGEEGTHVGSAAALDNTDLVFGQYREAGVLMYRDYPLELFMAQCYGNISDLGKGRQMPVHYGCKERHFVTISSPLATQIPQAVGAAYAAKRANANRVVICYFGEGAASEGDAHAGFNFAATLECPIIFFCRNNGYAISTPTSEQYRGDGIAARGPGYGIMSIRVDGNDVFAVYNATKEARRRAVAENQPFLIEAMTYRIGHHSTSDDSSAYRSVDEVNYWDKQDHPVSRLRHYLLSQGWWDEEQEKAWRKQSRKKVMEAFEQAERKPKPNPNLLFSDVYQEMPAQLRKQQESLARHLQTYGEHYPLDHFDK.

A mitochondrion-targeting transit peptide spans 1–45 (MAVAIAAARVWRLNRGLSQAALLLLRRPGARGLARSHPRRQQQQF). The tract at residues 33–54 (LARSHPRRQQQQFSSLDDKPQF) is disordered. Thiamine diphosphate-binding residues include Tyr158 and Arg159. Residue Ser206 coordinates K(+). Ser207 contacts thiamine diphosphate. Pro208, Thr211, and Gln212 together coordinate K(+). Glu238 provides a ligand contact to Mg(2+). Residues Gly239, Ala240, and Arg265 each contribute to the thiamine diphosphate site. Positions 267 and 269 each coordinate Mg(2+). Residue His336 coordinates thiamine diphosphate. Residue Ser337 is modified to Phosphoserine; by BCKDK. Thr338 carries the phosphothreonine modification. Phosphoserine occurs at positions 339 and 347. Lys356 bears the N6-acetyllysine; alternate mark. Lys356 is subject to N6-succinyllysine; alternate. An N6-succinyllysine modification is found at Lys380.

This sequence belongs to the BCKDHA family. In terms of assembly, heterotetramer of 2 alpha/BCKDHA and 2 beta chains/BCKDHB that forms the branched-chain alpha-keto acid decarboxylase (E1) component of the BCKD complex. The branched-chain alpha-ketoacid dehydrogenase is a large complex composed of three major building blocks E1, E2 and E3. It is organized around E2, a 24-meric cubic core composed of DBT, to which are associated 6 to 12 copies of E1, and approximately 6 copies of the dehydrogenase E3, a DLD dimer. Interacts with PPM1K. Requires thiamine diphosphate as cofactor. Mg(2+) serves as cofactor. In terms of processing, phosphorylated at Ser-337 by BCKDK and dephosphorylated by protein phosphatase PPM1K.

The protein resides in the mitochondrion matrix. It carries out the reaction N(6)-[(R)-lipoyl]-L-lysyl-[protein] + 3-methyl-2-oxobutanoate + H(+) = N(6)-[(R)-S(8)-2-methylpropanoyldihydrolipoyl]-L-lysyl-[protein] + CO2. Functionally, together with BCKDHB forms the heterotetrameric E1 subunit of the mitochondrial branched-chain alpha-ketoacid dehydrogenase (BCKD) complex. The BCKD complex catalyzes the multi-step oxidative decarboxylation of alpha-ketoacids derived from the branched-chain amino-acids valine, leucine and isoleucine producing CO2 and acyl-CoA which is subsequently utilized to produce energy. The E1 subunit catalyzes the first step with the decarboxylation of the alpha-ketoacid forming an enzyme-product intermediate. A reductive acylation mediated by the lipoylamide cofactor of E2 extracts the acyl group from the E1 active site for the next step of the reaction. This is 2-oxoisovalerate dehydrogenase subunit alpha, mitochondrial (BCKDHA) from Pan troglodytes (Chimpanzee).